The following is a 216-amino-acid chain: Refilin-B (216 aa).

Residues 1–52 (MVGRLSLQDVPELVDTKKKGDGVLDSPDSGLPPSPSPSHWGLAAATGGGGER) are disordered. Phosphoserine occurs at positions 6 and 26.

It belongs to the Refilin family. In terms of assembly, interacts with FLNA and FLNB.

The protein localises to the cytoplasm. Its subcellular location is the cytoskeleton. Its function is as follows. Involved in the regulation of the perinuclear actin network and nuclear shape through interaction with filamins. Plays an essential role in the formation of cartilaginous skeletal elements. The polypeptide is Refilin-B (Rattus norvegicus (Rat)).